A 463-amino-acid chain; its full sequence is MAHLVPAALPDSIFRAYDIRGVVGKTLHAETAYWIGRAIGAQSLAQGEPQVSVGRDGRLSGPMLVEQLIKGLVDAGCNVSDVGLVPTPALYYAANVLAGKSGVMLTGSHNPSDYNGFKIVIAGDTLANEQIQALLTRLKTNDLTLAQGRVEKVEILDRYFKQIVGDVKLAKKLKVVVDCGNGAAGVVAPQLIEALGCEVIPLFCEVDGNFPNHHPDPGKPENLEDLIAKVKETGADIGLAFDGDGDRVGVVTNTGSIVYPDRLLMLFAQDVLSRNPGAEIIFDVKCTRRLTPLIEQHGGRALMWKTGHSLIKKKMKQTGSLLAGEMSGHIFIKERWYGFDDGIYSAARLLEILSKTEQSAENLFAAFPNDISTPEINIDVTDEGKFSIIDALQRDADWGEANLTTIDGVRVDYANGWGLVRASNTTPVLVLRFEADSDAELQRIKDVFRTQLLRVEPELQLPF.

S108 functions as the Phosphoserine intermediate in the catalytic mechanism. Residues S108, D242, D244, and D246 each coordinate Mg(2+). E325, S327, and H329 together coordinate substrate.

It belongs to the phosphohexose mutase family. In terms of assembly, monomer. Mg(2+) is required as a cofactor.

It catalyses the reaction alpha-D-mannose 1-phosphate = D-mannose 6-phosphate. The catalysed reaction is alpha-D-glucose 1-phosphate = alpha-D-glucose 6-phosphate. It functions in the pathway nucleotide-sugar biosynthesis; GDP-alpha-D-mannose biosynthesis; alpha-D-mannose 1-phosphate from D-fructose 6-phosphate: step 2/2. The protein operates within bacterial outer membrane biogenesis; lipopolysaccharide biosynthesis. In terms of biological role, the phosphomannomutase activity produces a precursor for alginate polymerization. The alginate layer causes a mucoid phenotype and provides a protective barrier against host immune defenses and antibiotics. Also involved in core-LPS biosynthesis due to its phosphoglucomutase activity. Essential for biofilm production. The sequence is that of Phosphomannomutase/phosphoglucomutase (algC) from Pseudomonas putida (strain ATCC 47054 / DSM 6125 / CFBP 8728 / NCIMB 11950 / KT2440).